The following is a 535-amino-acid chain: MVTPLKLLNNRYRIIETLGRGGFGETFLAQDTHMPSARKCVIKHLKPVLENPEIPSWLRERFHREAATLEELGENHPQIPQLYAYFSEGEDFYLVQEWIPGLTLTQAHAQKGNFSSTAVEELLLGILPVLEFIHQRRIIHRDIKPDNIILREADGKPILIDFGIIKETMGTLVNPDGRSAYSVALGTPGYMASEQAAGRPVFSSDLYSLGLTAIFLLTGKTPQYLTSDSRTGEILWRQGAPQVSPTLAKVIDQAVRYHPRERFNSATAMAQTLQGNFSNVPMTKGDRPGNTVANGKTKSNHQPTAPTLVVGTPYNANDTQATKVYTQEFTGYTETQEGSPLMKWVVMPLVVLLVIGGGMAAGFWVTSQRRNNPPPAVEEPTEETPIPLPSLEPRPNLFETPSPIPTPATPSPEPTPSPSPSPETTSSPTEDTITPMEPEPSLDEPAPIPEPKPSPSPTISPQPSPTISIPVTPAPVPKPSPSPTPKPTVPPQISPTPQPSNTVPVIPPPENPSAETEPNLPAPPVGEKPIDPEQN.

Residues 12–277 (YRIIETLGRG…AMAQTLQGNF (266 aa)) form the Protein kinase domain. ATP-binding positions include 18–26 (LGRGGFGET) and Lys43. The active-site Proton acceptor is Asp142. The tract at residues 371–535 (NNPPPAVEEP…GEKPIDPEQN (165 aa)) is disordered. The span at 402 to 421 (SPIPTPATPSPEPTPSPSPS) shows a compositional bias: pro residues. The span at 422 to 435 (PETTSSPTEDTITP) shows a compositional bias: low complexity. Composition is skewed to pro residues over residues 446-464 (APIPEPKPSPSPTISPQPS) and 472-498 (TPAPVPKPSPSPTPKPTVPPQISPTPQ).

This sequence belongs to the protein kinase superfamily. Ser/Thr protein kinase family.

The enzyme catalyses L-seryl-[protein] + ATP = O-phospho-L-seryl-[protein] + ADP + H(+). The catalysed reaction is L-threonyl-[protein] + ATP = O-phospho-L-threonyl-[protein] + ADP + H(+). This Synechocystis sp. (strain ATCC 27184 / PCC 6803 / Kazusa) protein is Serine/threonine-protein kinase C (spkC).